A 168-amino-acid polypeptide reads, in one-letter code: ATP synthase subunit b (168 aa).

A helical transmembrane segment spans residues 11–31 (EISIINTLWYLIVFSILLLAV).

Belongs to the ATPase B chain family. As to quaternary structure, F-type ATPases have 2 components, F(1) - the catalytic core - and F(0) - the membrane proton channel. F(1) has five subunits: alpha(3), beta(3), gamma(1), delta(1), epsilon(1). F(0) has three main subunits: a(1), b(2) and c(10-14). The alpha and beta chains form an alternating ring which encloses part of the gamma chain. F(1) is attached to F(0) by a central stalk formed by the gamma and epsilon chains, while a peripheral stalk is formed by the delta and b chains.

Its subcellular location is the cell membrane. F(1)F(0) ATP synthase produces ATP from ADP in the presence of a proton or sodium gradient. F-type ATPases consist of two structural domains, F(1) containing the extramembraneous catalytic core and F(0) containing the membrane proton channel, linked together by a central stalk and a peripheral stalk. During catalysis, ATP synthesis in the catalytic domain of F(1) is coupled via a rotary mechanism of the central stalk subunits to proton translocation. Its function is as follows. Component of the F(0) channel, it forms part of the peripheral stalk, linking F(1) to F(0). The protein is ATP synthase subunit b of Lactobacillus delbrueckii subsp. bulgaricus (strain ATCC 11842 / DSM 20081 / BCRC 10696 / JCM 1002 / NBRC 13953 / NCIMB 11778 / NCTC 12712 / WDCM 00102 / Lb 14).